Reading from the N-terminus, the 100-residue chain is NAD(P)H-quinone oxidoreductase subunit 4L, chloroplastic (100 aa).

The next 3 membrane-spanning stretches (helical) occupy residues 1-21 (MLEH…YGLI), 31-51 (ICLE…SDFF), and 60-80 (IFAI…LAIL).

Belongs to the complex I subunit 4L family. In terms of assembly, NDH is composed of at least 16 different subunits, 5 of which are encoded in the nucleus.

Its subcellular location is the plastid. It localises to the chloroplast thylakoid membrane. It catalyses the reaction a plastoquinone + NADH + (n+1) H(+)(in) = a plastoquinol + NAD(+) + n H(+)(out). It carries out the reaction a plastoquinone + NADPH + (n+1) H(+)(in) = a plastoquinol + NADP(+) + n H(+)(out). Functionally, NDH shuttles electrons from NAD(P)H:plastoquinone, via FMN and iron-sulfur (Fe-S) centers, to quinones in the photosynthetic chain and possibly in a chloroplast respiratory chain. The immediate electron acceptor for the enzyme in this species is believed to be plastoquinone. Couples the redox reaction to proton translocation, and thus conserves the redox energy in a proton gradient. In Trachelium caeruleum (Blue throatwort), this protein is NAD(P)H-quinone oxidoreductase subunit 4L, chloroplastic.